Consider the following 66-residue polypeptide: Large ribosomal subunit protein uL29c (66 aa).

The protein belongs to the universal ribosomal protein uL29 family.

Its subcellular location is the plastid. The protein localises to the chloroplast. In Gracilaria tenuistipitata var. liui (Red alga), this protein is Large ribosomal subunit protein uL29c.